The sequence spans 227 residues: Biosynthetic peptidoglycan transglycosylase (227 aa).

Residues 7-27 traverse the membrane as a helical segment; sequence VALLTLLLLVAAPYVLTLVYG.

The protein belongs to the glycosyltransferase 51 family.

It localises to the cell inner membrane. The enzyme catalyses [GlcNAc-(1-&gt;4)-Mur2Ac(oyl-L-Ala-gamma-D-Glu-L-Lys-D-Ala-D-Ala)](n)-di-trans,octa-cis-undecaprenyl diphosphate + beta-D-GlcNAc-(1-&gt;4)-Mur2Ac(oyl-L-Ala-gamma-D-Glu-L-Lys-D-Ala-D-Ala)-di-trans,octa-cis-undecaprenyl diphosphate = [GlcNAc-(1-&gt;4)-Mur2Ac(oyl-L-Ala-gamma-D-Glu-L-Lys-D-Ala-D-Ala)](n+1)-di-trans,octa-cis-undecaprenyl diphosphate + di-trans,octa-cis-undecaprenyl diphosphate + H(+). It functions in the pathway cell wall biogenesis; peptidoglycan biosynthesis. Its function is as follows. Peptidoglycan polymerase that catalyzes glycan chain elongation from lipid-linked precursors. The chain is Biosynthetic peptidoglycan transglycosylase from Rhodopseudomonas palustris (strain HaA2).